We begin with the raw amino-acid sequence, 104 residues long: ATP-dependent Clp protease adapter protein ClpS (104 aa).

Belongs to the ClpS family. Binds to the N-terminal domain of the chaperone ClpA.

Involved in the modulation of the specificity of the ClpAP-mediated ATP-dependent protein degradation. The polypeptide is ATP-dependent Clp protease adapter protein ClpS (Paraburkholderia xenovorans (strain LB400)).